The primary structure comprises 437 residues: UDP-N-acetylmuramate--L-alanine ligase (437 aa).

ATP is bound at residue 114-120 (GTHGKTS).

This sequence belongs to the MurCDEF family.

It localises to the cytoplasm. The catalysed reaction is UDP-N-acetyl-alpha-D-muramate + L-alanine + ATP = UDP-N-acetyl-alpha-D-muramoyl-L-alanine + ADP + phosphate + H(+). It participates in cell wall biogenesis; peptidoglycan biosynthesis. Its function is as follows. Cell wall formation. This Lactobacillus acidophilus (strain ATCC 700396 / NCK56 / N2 / NCFM) protein is UDP-N-acetylmuramate--L-alanine ligase.